A 565-amino-acid chain; its full sequence is Mitochondrial distribution and morphology protein 34 (565 aa).

One can recognise an SMP-LTD domain in the interval 1–208; sequence MAFNFNWSPL…VPEYRDRESE (208 aa). The span at 209–220 shows a compositional bias: polar residues; that stretch reads SVNTLDLSSESG. 3 disordered regions span residues 209-241, 347-463, and 533-565; these read SVNTLDLSSESGPGQDPLASPPQDPVDASGNAL, FGSY…SRSA, and MQEQKIDPSGSRPFPDFWDDHSREEIPPPAYGH. Residues 353 to 367 show a composition bias toward basic residues; the sequence is PGRHSRSHTKKRKKR. Over residues 368-378 the composition is skewed to basic and acidic residues; it reads VVDLRRPKTTD. Over residues 382–391 the composition is skewed to low complexity; it reads SVSGDSVFSS. Composition is skewed to polar residues over residues 392 to 402 and 439 to 463; these read ENATSAPTIFS and QGDQTLRRSNLSMSEAAQPSSSRSA.

It belongs to the MDM34 family. In terms of assembly, component of the ER-mitochondria encounter structure (ERMES) or MDM complex, composed of mmm1, mdm10, mdm12 and mdm34.

The protein resides in the mitochondrion outer membrane. Component of the ERMES/MDM complex, which serves as a molecular tether to connect the endoplasmic reticulum (ER) and mitochondria. Components of this complex are involved in the control of mitochondrial shape and protein biogenesis, and function in nonvesicular lipid trafficking between the ER and mitochondria. Mdm34 is required for the interaction of the ER-resident membrane protein mmm1 and the outer mitochondrial membrane-resident beta-barrel protein mdm10. The polypeptide is Mitochondrial distribution and morphology protein 34 (Talaromyces marneffei (strain ATCC 18224 / CBS 334.59 / QM 7333) (Penicillium marneffei)).